Here is a 94-residue protein sequence, read N- to C-terminus: Small ribosomal subunit protein uS19 (94 aa).

The protein belongs to the universal ribosomal protein uS19 family.

Protein S19 forms a complex with S13 that binds strongly to the 16S ribosomal RNA. This is Small ribosomal subunit protein uS19 from Clostridium novyi (strain NT).